The chain runs to 535 residues: Glutamyl-tRNA reductase 3, chloroplastic (535 aa).

The Nucleophile role is filled by Cys131. Substrate is bound by residues 131–133 (CNR), Ser190, 195–197 (EGQ), and Gln201. 272-277 (GAGKMG) serves as a coordination point for NADP(+).

This sequence belongs to the glutamyl-tRNA reductase family. In terms of tissue distribution, primarily expressed in roots.

It is found in the plastid. Its subcellular location is the chloroplast. It carries out the reaction (S)-4-amino-5-oxopentanoate + tRNA(Glu) + NADP(+) = L-glutamyl-tRNA(Glu) + NADPH + H(+). The protein operates within porphyrin-containing compound metabolism; protoporphyrin-IX biosynthesis; 5-aminolevulinate from L-glutamyl-tRNA(Glu): step 1/2. Its function is as follows. Catalyzes the NADPH-dependent reduction of glutamyl-tRNA(Glu) to glutamate 1-semialdehyde (GSA). The chain is Glutamyl-tRNA reductase 3, chloroplastic (HEMA3) from Hordeum vulgare (Barley).